Consider the following 143-residue polypeptide: Large-conductance mechanosensitive channel (143 aa).

The next 3 helical transmembrane spans lie at 16–36, 40–60, and 87–107; these read VMDLAVGVIIGGAFSGITNSL, IIMPIVAFIAGGELNFKNMFI, and GSFITVLINFLILAFIIFMMV.

This sequence belongs to the MscL family. As to quaternary structure, homopentamer.

The protein localises to the cell inner membrane. In terms of biological role, channel that opens in response to stretch forces in the membrane lipid bilayer. May participate in the regulation of osmotic pressure changes within the cell. This Psychrobacter sp. (strain PRwf-1) protein is Large-conductance mechanosensitive channel.